The chain runs to 247 residues: Lys-63-specific deubiquitinase BRCC36 (247 aa).

A2 carries the post-translational modification N-acetylalanine. In terms of domain architecture, MPN spans 12-179 (VHLESDAFLV…YTCFQSIQAQ (168 aa)). Residues H122, H124, and D135 each coordinate Zn(2+). The JAMM motif motif lies at 122-135 (HSHPHITVWPSHVD). Position 189 is a phosphoserine (S189).

The protein belongs to the peptidase M67A family. BRCC36 subfamily. Component of the ARISC complex, at least composed of UIMC1/RAP80, ABRAXAS1, BRCC3/BRCC36, BABAM2 and BABAM1/NBA1. Component of the BRCA1-A complex, at least composed of BRCA1, BARD1, UIMC1/RAP80, ABRAXAS1, BRCC3/BRCC36, BABAM2 and BABAM1/NBA1. In the BRCA1-A complex, interacts directly with ABRAXAS1 and BABAM2. Component of the BRISC complex, at least composed of ABRAXAS2, BRCC3/BRCC36, BABAM2 and BABAM1/NBA1. Identified in a complex with SHMT2 and the other subunits of the BRISC complex. In the BRISC complex, interacts directly with ABRAXAS2. Identified in a complex with ABRAXAS2 and NUMA1. The BRISC complex interacts with the CSN complex. Component of the BRCA1/BRCA2 containing complex (BRCC), which also contains BRCA1, BRCA2, BARD1, BABAM2 and RAD51. BRCC is a ubiquitin E3 ligase complex that enhances cellular survival following DNA damage. Interacts with BRCA1. Binds polyubiquitin. Interacts with PWWP2B. Interacts with HDAC1; this interaction is enhanced in the presence of PWWP2B. Zn(2+) serves as cofactor.

The protein resides in the nucleus. It localises to the cytoplasm. It is found in the cytoskeleton. The protein localises to the spindle pole. Functionally, metalloprotease that specifically cleaves 'Lys-63'-linked polyubiquitin chains. Does not have activity toward 'Lys-48'-linked polyubiquitin chains. Component of the BRCA1-A complex, a complex that specifically recognizes 'Lys-63'-linked ubiquitinated histones H2A and H2AX at DNA lesions sites, leading to target the BRCA1-BARD1 heterodimer to sites of DNA damage at double-strand breaks (DSBs). In the BRCA1-A complex, it specifically removes 'Lys-63'-linked ubiquitin on histones H2A and H2AX, antagonizing the RNF8-dependent ubiquitination at double-strand breaks (DSBs). Catalytic subunit of the BRISC complex, a multiprotein complex that specifically cleaves 'Lys-63'-linked ubiquitin in various substrates. Mediates the specific 'Lys-63'-specific deubiquitination associated with the COP9 signalosome complex (CSN), via the interaction of the BRISC complex with the CSN complex. The BRISC complex is required for normal mitotic spindle assembly and microtubule attachment to kinetochores via its role in deubiquitinating NUMA1. Plays a role in interferon signaling via its role in the deubiquitination of the interferon receptor IFNAR1; deubiquitination increases IFNAR1 activity by enhancing its stability and cell surface expression. Acts as a regulator of the NLRP3 inflammasome by mediating deubiquitination of NLRP3, leading to NLRP3 inflammasome assembly. Down-regulates the response to bacterial lipopolysaccharide (LPS) via its role in IFNAR1 deubiquitination. Deubiquitinates HDAC1 and PWWP2B leading to their stabilization. The chain is Lys-63-specific deubiquitinase BRCC36 (BRCC3) from Pongo abelii (Sumatran orangutan).